The sequence spans 466 residues: Asparagine--tRNA ligase (466 aa).

Belongs to the class-II aminoacyl-tRNA synthetase family. Homodimer.

It localises to the cytoplasm. It carries out the reaction tRNA(Asn) + L-asparagine + ATP = L-asparaginyl-tRNA(Asn) + AMP + diphosphate + H(+). This chain is Asparagine--tRNA ligase, found in Xylella fastidiosa (strain Temecula1 / ATCC 700964).